Consider the following 517-residue polypeptide: Cytochrome P450 monooxygenase calE (517 aa).

Residue Asn8 is glycosylated (N-linked (GlcNAc...) asparagine). The chain crosses the membrane as a helical span at residues 14 to 34 (SLMHHYILIAILVASIIAMVV). Cys458 is a heme binding site.

This sequence belongs to the cytochrome P450 family. It depends on heme as a cofactor.

It is found in the membrane. It functions in the pathway secondary metabolite biosynthesis. In terms of biological role, cytochrome P450 monooxygenase; part of the gene cluster that mediates the biosynthesis of calbistrin A and related compounds. Calbistrin A is a secondary metabolite with an interesting structure that was recently found to have bioactivity against leukemia cells. It consists of two polyketides linked by an ester bond: a bicyclic decalin containing polyketide and a linear 12 carbon dioic acid structure. The polyketide synthase calA is probably responsible for forming the decalin moiety. Because calA lacks a designated enoylreductase (ER) domain, the required activity is provided by the trans-enoyl reductase calK. Following release from the PKS, calF then probably catalyzes the oxidation and the subsequent Diels Alder cycloisomerization that lead to the formation of the decalin moiety. The decalin polyketide backbone includes two C-methyl groups, at C7 and C11 in backbone, of which the C7 position is probably methylated by the methyltransferase domain of calA. A candidate for adding the methyl group at C11, if not done by CalA, is the cluster methyltransferase calH. Several additional tailoring enzymes within the cluster could be involved in the modification of the decalin polyketide product. Those include the 3 cytochrome P450 monooxygenases CalE, CalG and CalL, of which one might be responsible for the introduction of the extra hydroxyl group attached to the backbone of the decalin moiety, at position C9 in the backbone, that allows for attachment of the linear moiety. One tailoring enzyme activity that is expected to be involved in biosynthesis of calbistrin is an acyltransferase for connecting the two polyketide synthase products, and which could be performed by the cluster acyltransferase calJ. The enzyme responsible for the biosynthesis of the linear moiety, probably a second PKS, has not been identified yet. The chain is Cytochrome P450 monooxygenase calE from Penicillium decumbens.